A 132-amino-acid polypeptide reads, in one-letter code: Protein KRTCAP2 homolog (132 aa).

4 helical membrane passes run methionine 1–serine 21, methionine 35–valine 55, alanine 69–valine 89, and valine 92–asparagine 109.

The protein belongs to the KRTCAP2 family. As to quaternary structure, component of the oligosaccharyltransferase (OST) complex.

It is found in the membrane. Its function is as follows. Subunit of the oligosaccharyl transferase (OST) complex that catalyzes the initial transfer of a defined glycan (Glc(3)Man(9)GlcNAc(2) in eukaryotes) from the lipid carrier dolichol-pyrophosphate to an asparagine residue within an Asn-X-Ser/Thr consensus motif in nascent polypeptide chains, the first step in protein N-glycosylation. N-glycosylation occurs cotranslationally and the complex associates with the Sec61 complex at the channel-forming translocon complex that mediates protein translocation across the endoplasmic reticulum (ER). All subunits are required for a maximal enzyme activity. This chain is Protein KRTCAP2 homolog, found in Aedes aegypti (Yellowfever mosquito).